A 114-amino-acid chain; its full sequence is T cell receptor beta variable 25-1 (114 aa).

Residues Met-1–Ala-21 form the signal peptide. Positions Asp-22–Glu-114 constitute an Ig-like domain. The cysteines at positions 42 and 110 are disulfide-linked. Asn-72 carries N-linked (GlcNAc...) asparagine glycosylation.

Alpha-beta TR is a heterodimer composed of an alpha and beta chain; disulfide-linked. The alpha-beta TR is associated with the transmembrane signaling CD3 coreceptor proteins to form the TR-CD3 (TcR or TCR). The assembly of alpha-beta TR heterodimers with CD3 occurs in the endoplasmic reticulum where a single alpha-beta TR heterodimer associates with one CD3D-CD3E heterodimer, one CD3G-CD3E heterodimer and one CD247 homodimer forming a stable octameric structure. CD3D-CD3E and CD3G-CD3E heterodimers preferentially associate with TR alpha and TR beta chains, respectively. The association of the CD247 homodimer is the last step of TcR assembly in the endoplasmic reticulum and is required for transport to the cell surface.

It is found in the cell membrane. In terms of biological role, v region of the variable domain of T cell receptor (TR) beta chain that participates in the antigen recognition. Alpha-beta T cell receptors are antigen specific receptors which are essential to the immune response and are present on the cell surface of T lymphocytes. Recognize peptide-major histocompatibility (MH) (pMH) complexes that are displayed by antigen presenting cells (APC), a prerequisite for efficient T cell adaptive immunity against pathogens. Binding of alpha-beta TR to pMH complex initiates TR-CD3 clustering on the cell surface and intracellular activation of LCK that phosphorylates the ITAM motifs of CD3G, CD3D, CD3E and CD247 enabling the recruitment of ZAP70. In turn ZAP70 phosphorylates LAT, which recruits numerous signaling molecules to form the LAT signalosome. The LAT signalosome propagates signal branching to three major signaling pathways, the calcium, the mitogen-activated protein kinase (MAPK) kinase and the nuclear factor NF-kappa-B (NF-kB) pathways, leading to the mobilization of transcription factors that are critical for gene expression and essential for T cell growth and differentiation. The T cell repertoire is generated in the thymus, by V-(D)-J rearrangement. This repertoire is then shaped by intrathymic selection events to generate a peripheral T cell pool of self-MH restricted, non-autoaggressive T cells. Post-thymic interaction of alpha-beta TR with the pMH complexes shapes TR structural and functional avidity. This Homo sapiens (Human) protein is T cell receptor beta variable 25-1.